The sequence spans 286 residues: Ribosomal RNA small subunit methyltransferase A (286 aa).

S-adenosyl-L-methionine is bound by residues His11, Leu13, Gly44, Glu65, Asp90, and Asn115.

This sequence belongs to the class I-like SAM-binding methyltransferase superfamily. rRNA adenine N(6)-methyltransferase family. RsmA subfamily.

It is found in the cytoplasm. It carries out the reaction adenosine(1518)/adenosine(1519) in 16S rRNA + 4 S-adenosyl-L-methionine = N(6)-dimethyladenosine(1518)/N(6)-dimethyladenosine(1519) in 16S rRNA + 4 S-adenosyl-L-homocysteine + 4 H(+). Its function is as follows. Specifically dimethylates two adjacent adenosines (A1518 and A1519) in the loop of a conserved hairpin near the 3'-end of 16S rRNA in the 30S particle. May play a critical role in biogenesis of 30S subunits. This chain is Ribosomal RNA small subunit methyltransferase A, found in Nostoc punctiforme (strain ATCC 29133 / PCC 73102).